The sequence spans 1348 residues: Phosphoribosylformylglycinamidine synthase (1348 aa).

ATP-binding positions include 300–311 (GAATGAGGEIRD) and alanine 701. Mg(2+) is bound by residues aspartate 702, glutamate 741, asparagine 745, and aspartate 941. Residue serine 943 participates in ATP binding. The Glutamine amidotransferase type-1 domain maps to 1099–1348 (VAILREQGVN…MFRNARVWCG (250 aa)). Catalysis depends on cysteine 1192, which acts as the Nucleophile. Active-site residues include histidine 1313 and glutamate 1315.

It in the N-terminal section; belongs to the FGAMS family. In terms of assembly, monomer.

The protein localises to the cytoplasm. It carries out the reaction N(2)-formyl-N(1)-(5-phospho-beta-D-ribosyl)glycinamide + L-glutamine + ATP + H2O = 2-formamido-N(1)-(5-O-phospho-beta-D-ribosyl)acetamidine + L-glutamate + ADP + phosphate + H(+). Its pathway is purine metabolism; IMP biosynthesis via de novo pathway; 5-amino-1-(5-phospho-D-ribosyl)imidazole from N(2)-formyl-N(1)-(5-phospho-D-ribosyl)glycinamide: step 1/2. Phosphoribosylformylglycinamidine synthase involved in the purines biosynthetic pathway. Catalyzes the ATP-dependent conversion of formylglycinamide ribonucleotide (FGAR) and glutamine to yield formylglycinamidine ribonucleotide (FGAM) and glutamate. The polypeptide is Phosphoribosylformylglycinamidine synthase (Xanthomonas axonopodis pv. citri (strain 306)).